The primary structure comprises 537 residues: P2Y purinoceptor 4 (537 aa).

Over 1–49 the chain is Extracellular; it reads MTEDIMATSYPTFLTTPYLPMKLLMNLTNDTEDICVFDEGFKFLLLPVS. Residues Asn26 and Asn29 are each glycosylated (N-linked (GlcNAc...) asparagine). The chain crosses the membrane as a helical span at residues 50–70; that stretch reads YSAVFMVGLPLNIAAMWIFIA. Residues 71-79 lie on the Cytoplasmic side of the membrane; it reads KMRPWNPTT. Residues 80–100 traverse the membrane as a helical segment; sequence VYMFNLALSDTLYVLSLPTLV. Topologically, residues 101–118 are extracellular; it reads YYYADKNNWPFGEVLCKL. Cys116 and Cys193 form a disulfide bridge. Residues 119-139 form a helical membrane-spanning segment; the sequence is VRFLFYANLYSSILFLTCISV. The Cytoplasmic segment spans residues 140 to 161; sequence HRYRGVCHPITSLRRMNAKHAY. A helical membrane pass occupies residues 162–182; sequence VICALVWLSVTLCLVPNLIFV. At 183-210 the chain is on the extracellular side; that stretch reads TVSPKVKNTICHDTTRPEDFARYVEYST. Residues 211 to 231 traverse the membrane as a helical segment; that stretch reads AIMCLLFGIPCLIIAGCYGLM. Over 232–254 the chain is Cytoplasmic; sequence TRELMKPIVSGNQQTLPSYKKRS. A helical membrane pass occupies residues 255 to 275; it reads IKTIIFVMIAFAICFMPFHIT. Residues 276–292 are Extracellular-facing; the sequence is RTLYYYARLLGIKCYAL. Residues 293-316 traverse the membrane as a helical segment; sequence NVINVTYKVTRPLASANSCIDPIL. Residues 317-537 are Cytoplasmic-facing; that stretch reads YFLANDRYRR…EKELQNFPKA (221 aa). The segment at 401-505 is disordered; it reads NRRSTIKRNS…GEGTSTWNLL (105 aa). Basic and acidic residues-rich tracts occupy residues 409–423 and 431–447; these read NSTD…RHGE and VVEK…RKTT. Over residues 448–465 the composition is skewed to polar residues; the sequence is EQSSKTNAEQDELQTQID.

The protein belongs to the G-protein coupled receptor 1 family.

The protein resides in the cell membrane. Functionally, receptor for extracellular ATP, UTP, CTP, GTP and ITP. The activity of this receptor is mediated by G proteins which activate a phosphatidylinositol-calcium second messenger system. May play a key role in the early development of neural tissue. In Xenopus laevis (African clawed frog), this protein is P2Y purinoceptor 4 (p2ry4).